The sequence spans 72 residues: UPF0352 protein swp_2271 (72 aa).

The protein belongs to the UPF0352 family.

The sequence is that of UPF0352 protein swp_2271 from Shewanella piezotolerans (strain WP3 / JCM 13877).